Consider the following 368-residue polypeptide: Phosphate acyltransferase (368 aa).

Positions 338-368 are disordered; that stretch reads GDGGHDAGGAGTASPAPGHHAEPSAAQSSKA.

It belongs to the PlsX family. As to quaternary structure, homodimer. Probably interacts with PlsY.

It localises to the cytoplasm. It catalyses the reaction a fatty acyl-[ACP] + phosphate = an acyl phosphate + holo-[ACP]. It participates in lipid metabolism; phospholipid metabolism. Catalyzes the reversible formation of acyl-phosphate (acyl-PO(4)) from acyl-[acyl-carrier-protein] (acyl-ACP). This enzyme utilizes acyl-ACP as fatty acyl donor, but not acyl-CoA. The chain is Phosphate acyltransferase from Burkholderia ambifaria (strain MC40-6).